The chain runs to 694 residues: Putative ankyrin repeat protein RBE_0921 (694 aa).

10 ANK repeats span residues 122–151, 155–185, 216–245, 249–275, 279–317, 321–350, 351–382, 384–413, 423–452, and 456–485; these read LGKT…NINV, NGRN…NINS, FNRT…NVEA, TGET…NTEA, LGRT…NPNA, YGFT…KFKK, NRYE…NIND, NGQN…DNGK, QRNT…DINA, and DGET…DINI.

This Rickettsia bellii (strain RML369-C) protein is Putative ankyrin repeat protein RBE_0921.